Here is a 164-residue protein sequence, read N- to C-terminus: MAKNSKKVKSNTNKANNFKLLAENRYAKFQYAISETIEAGIELLGTEVKSIRNGKANLRDGYCSFRDGEILLLNVHISPHKNVGSFFNHDPLRNRKLLLHKKEIIKMKSNTEKKGMTIVPLSLYLKGSWIKITLGVGKGKKLHDKRQDEKQKSIKKEINSALKR.

The tract at residues K141–R164 is disordered. Over residues K145–I158 the composition is skewed to basic and acidic residues.

This sequence belongs to the SmpB family.

Its subcellular location is the cytoplasm. In terms of biological role, required for rescue of stalled ribosomes mediated by trans-translation. Binds to transfer-messenger RNA (tmRNA), required for stable association of tmRNA with ribosomes. tmRNA and SmpB together mimic tRNA shape, replacing the anticodon stem-loop with SmpB. tmRNA is encoded by the ssrA gene; the 2 termini fold to resemble tRNA(Ala) and it encodes a 'tag peptide', a short internal open reading frame. During trans-translation Ala-aminoacylated tmRNA acts like a tRNA, entering the A-site of stalled ribosomes, displacing the stalled mRNA. The ribosome then switches to translate the ORF on the tmRNA; the nascent peptide is terminated with the 'tag peptide' encoded by the tmRNA and targeted for degradation. The ribosome is freed to recommence translation, which seems to be the essential function of trans-translation. The protein is SsrA-binding protein of Prochlorococcus marinus (strain MIT 9301).